The sequence spans 86 residues: UPF0297 protein LSL_1110 (86 aa).

The protein belongs to the UPF0297 family.

This Ligilactobacillus salivarius (strain UCC118) (Lactobacillus salivarius) protein is UPF0297 protein LSL_1110.